The sequence spans 367 residues: Dual specificity protein phosphatase 1 (367 aa).

The Rhodanese domain maps to 20-137; the sequence is RAAQCLLLDC…FSASCPELCS (118 aa). The region spanning 173–314 is the Tyrosine-protein phosphatase domain; the sequence is GPVEILSFLY…LLQFESQVLA (142 aa). The Phosphocysteine intermediate role is filled by cysteine 258. A phosphoserine; by MAPK1 and MAPK3 mark is found at serine 359 and serine 364.

Belongs to the protein-tyrosine phosphatase family. Non-receptor class dual specificity subfamily. In terms of processing, phosphorylation at Ser-359 and Ser-364 by MAPK1/ERK2 and MAPK3/ERK1 reduces its rate of degradation. Post-translationally, 'Lys-48'-linked polyubiquitinated by NEURL3, leading to proteasomal degradation. Brain. High level expression seen in the cingulate gyrus within the retrospinal cortex, ventral and medial divisions of the anterior thalamus and the medial geniculate nucleus. Expressed at moderate levels in the parietal and temporal cortex. Expressed in the cerebellum.

It is found in the nucleus. The catalysed reaction is O-phospho-L-tyrosyl-[protein] + H2O = L-tyrosyl-[protein] + phosphate. The enzyme catalyses O-phospho-L-seryl-[protein] + H2O = L-seryl-[protein] + phosphate. It carries out the reaction O-phospho-L-threonyl-[protein] + H2O = L-threonyl-[protein] + phosphate. Dual specificity phosphatase that dephosphorylates MAP kinase MAPK1/ERK2 on both 'Thr-183' and 'Tyr-185', regulating its activity during the meiotic cell cycle. This chain is Dual specificity protein phosphatase 1, found in Rattus norvegicus (Rat).